Here is a 458-residue protein sequence, read N- to C-terminus: Serine protease Do-like HtrB (458 aa).

A compositionally biased stretch (basic and acidic residues) spans 1-18 (MDYRRDGQNDQHQTEPSH). A disordered region spans residues 1–42 (MDYRRDGQNDQHQTEPSHTEQQNTENQKLIGHSEQELLDAPV). Topologically, residues 1–71 (MDYRRDGQND…TAVKKEKKRR (71 aa)) are cytoplasmic. The helical transmembrane segment at 72–92 (AAWLSPILGGIIGGGLMLGIA) threads the bilayer. Over 93 to 458 (PYLPSDQNQA…LTKQTESSSS (366 aa)) the chain is Extracellular. Residues 146–170 (QTSQNNTFGTGGGSSSESESGTGSG) form a disordered region. Active-site charge relay system residues include His187, Asp217, and Ser298. Substrate is bound by residues 296–298 (GNS) and 352–356 (LGVQM). Residues 356-440 (MIDMSQVPET…KTTIQVLRKG (85 aa)) form the PDZ domain.

This sequence belongs to the peptidase S1C family.

It is found in the cell membrane. It carries out the reaction Acts on substrates that are at least partially unfolded. The cleavage site P1 residue is normally between a pair of hydrophobic residues, such as Val-|-Val.. Functionally, degrades abnormal exported proteins and responsible for the propeptide processing of a natural pro-protein and for the maturation of a native protein. It also plays a prominent role in stress (heat shock, ethanol, puromycin and NaCl) resistance during active exponential growth. The chain is Serine protease Do-like HtrB (htrB) from Bacillus subtilis (strain 168).